A 520-amino-acid polypeptide reads, in one-letter code: Laccase-4 (520 aa).

The signal sequence occupies residues 1-18 (MGRFSSLCALTAVIHSFG). Plastocyanin-like domains lie at 24–149 (IGPV…MVVY), 161–303 (VDDE…ILRY), and 370–491 (TVPV…FSED). Residues Asn73 and Asn76 are each glycosylated (N-linked (GlcNAc...) asparagine). Residues His86, His88, His131, and His133 each contribute to the Cu cation site. Disulfide bonds link Cys107-Cys509 and Cys139-Cys227. N-linked (GlcNAc...) asparagine glycans are attached at residues Asn239 and Asn399. Cu cation-binding residues include His418, His421, His423, His473, Cys474, His475, and His479. A glycan (N-linked (GlcNAc...) asparagine) is linked at Asn497.

The protein belongs to the multicopper oxidase family. Homodimer. The cofactor is Cu cation.

The protein localises to the secreted. It carries out the reaction 4 hydroquinone + O2 = 4 benzosemiquinone + 2 H2O. Functionally, lignin degradation and detoxification of lignin-derived products. The chain is Laccase-4 (LCC4) from Trametes villosa (White-rot fungus).